We begin with the raw amino-acid sequence, 288 residues long: 33 kDa chaperonin (288 aa).

Cystine bridges form between cysteine 235–cysteine 237 and cysteine 268–cysteine 271.

The protein belongs to the HSP33 family. Post-translationally, under oxidizing conditions two disulfide bonds are formed involving the reactive cysteines. Under reducing conditions zinc is bound to the reactive cysteines and the protein is inactive.

It localises to the cytoplasm. In terms of biological role, redox regulated molecular chaperone. Protects both thermally unfolding and oxidatively damaged proteins from irreversible aggregation. Plays an important role in the bacterial defense system toward oxidative stress. The protein is 33 kDa chaperonin of Streptococcus thermophilus (strain CNRZ 1066).